A 127-amino-acid polypeptide reads, in one-letter code: Small ribosomal subunit protein uS11 (127 aa).

It belongs to the universal ribosomal protein uS11 family. In terms of assembly, part of the 30S ribosomal subunit. Interacts with proteins S7 and S18. Binds to IF-3.

Its function is as follows. Located on the platform of the 30S subunit, it bridges several disparate RNA helices of the 16S rRNA. Forms part of the Shine-Dalgarno cleft in the 70S ribosome. The chain is Small ribosomal subunit protein uS11 from Streptococcus thermophilus (strain CNRZ 1066).